We begin with the raw amino-acid sequence, 176 residues long: Ribosome maturation factor RimM (176 aa).

Residues 97-176 form the PRC barrel domain; the sequence is EDEFYWRDLI…QILVDWDPDF (80 aa).

This sequence belongs to the RimM family. In terms of assembly, binds ribosomal protein uS19.

The protein resides in the cytoplasm. Its function is as follows. An accessory protein needed during the final step in the assembly of 30S ribosomal subunit, possibly for assembly of the head region. Essential for efficient processing of 16S rRNA. May be needed both before and after RbfA during the maturation of 16S rRNA. It has affinity for free ribosomal 30S subunits but not for 70S ribosomes. The chain is Ribosome maturation factor RimM from Shewanella halifaxensis (strain HAW-EB4).